A 257-amino-acid chain; its full sequence is MKIDVNSDMGEGFGVWRVCDDDAMMRIVSSANIACGFHAGDPAIMTRMVRLAKAHGVGIGAHPGLPDKLGFGRKEMAFSADELCQLVVYQIGALCALAENEGMRVSHVSFHAAMGNMINRDDILALQVMQAIHRLDPEMIIFSQPDTIIERAAREAGLRSLTLFLADRAYDAQGHLVPRGTAGALISEETQVRDRVRQFLEQGTVKTIEGDMISVRAQSILVHSDTPGSVELAAIVRSEIEACGGTVTPAADVIAPS.

Belongs to the LamB/PxpA family. Forms a complex composed of PxpA, PxpB and PxpC.

The enzyme catalyses 5-oxo-L-proline + ATP + 2 H2O = L-glutamate + ADP + phosphate + H(+). In terms of biological role, catalyzes the cleavage of 5-oxoproline to form L-glutamate coupled to the hydrolysis of ATP to ADP and inorganic phosphate. The sequence is that of 5-oxoprolinase subunit A from Pectobacterium atrosepticum (strain SCRI 1043 / ATCC BAA-672) (Erwinia carotovora subsp. atroseptica).